The following is a 356-amino-acid chain: UDP-N-acetylenolpyruvoylglucosamine reductase (356 aa).

Residues 19–227 (LGGPAARFCS…RDAVLSLRRS (209 aa)) enclose the FAD-binding PCMH-type domain. Arginine 167 is an active-site residue. The active-site Proton donor is serine 244. Glutamate 348 is a catalytic residue.

Belongs to the MurB family. It depends on FAD as a cofactor.

Its subcellular location is the cytoplasm. It catalyses the reaction UDP-N-acetyl-alpha-D-muramate + NADP(+) = UDP-N-acetyl-3-O-(1-carboxyvinyl)-alpha-D-glucosamine + NADPH + H(+). The protein operates within cell wall biogenesis; peptidoglycan biosynthesis. Functionally, cell wall formation. The protein is UDP-N-acetylenolpyruvoylglucosamine reductase of Thermobifida fusca (strain YX).